Reading from the N-terminus, the 188-residue chain is Protein-export protein SecB (188 aa).

Disordered stretches follow at residues methionine 1–lysine 21 and arginine 160–glutamine 188. Positions serine 176–glutamine 188 are enriched in polar residues.

Belongs to the SecB family. In terms of assembly, homotetramer, a dimer of dimers. One homotetramer interacts with 1 SecA dimer.

It localises to the cytoplasm. One of the proteins required for the normal export of preproteins out of the cell cytoplasm. It is a molecular chaperone that binds to a subset of precursor proteins, maintaining them in a translocation-competent state. It also specifically binds to its receptor SecA. The sequence is that of Protein-export protein SecB from Alkalilimnicola ehrlichii (strain ATCC BAA-1101 / DSM 17681 / MLHE-1).